A 268-amino-acid polypeptide reads, in one-letter code: L-aspartate dehydrogenase (268 aa).

Residues Ala125 and Asn191 each contribute to the NAD(+) site. The active site involves His221.

Belongs to the L-aspartate dehydrogenase family.

It carries out the reaction L-aspartate + NADP(+) + H2O = oxaloacetate + NH4(+) + NADPH + H(+). It catalyses the reaction L-aspartate + NAD(+) + H2O = oxaloacetate + NH4(+) + NADH + H(+). Its pathway is cofactor biosynthesis; NAD(+) biosynthesis; iminoaspartate from L-aspartate (dehydrogenase route): step 1/1. Functionally, specifically catalyzes the NAD or NADP-dependent dehydrogenation of L-aspartate to iminoaspartate. This is L-aspartate dehydrogenase from Ralstonia nicotianae (strain ATCC BAA-1114 / GMI1000) (Ralstonia solanacearum).